Here is a 1058-residue protein sequence, read N- to C-terminus: Carbamoyl phosphate synthase large chain (1058 aa).

The tract at residues 1 to 401 is carboxyphosphate synthetic domain; the sequence is MPKRKDIQKI…SLLKACRSLE (401 aa). Residues Arg129, Arg169, Gly175, Gly176, Arg208, Ile210, Glu215, Gly241, Ile242, His243, Gln284, and Glu298 each contribute to the ATP site. The 195-residue stretch at 133–327 folds into the ATP-grasp 1 domain; sequence KQLMQELDQP…IAKLAAKIAV (195 aa). Mg(2+) contacts are provided by Gln284, Glu298, and Asn300. Residues Gln284, Glu298, and Asn300 each contribute to the Mn(2+) site. The interval 402–546 is oligomerization domain; the sequence is IGVCHNEMTS…YSTYELENES (145 aa). Residues 547 to 929 form a carbamoyl phosphate synthetic domain region; sequence VQSNKESILV…ALYKAFEANN (383 aa). Residues 671–861 enclose the ATP-grasp 2 domain; it reads EKALKELGIP…MAQIATKLIL (191 aa). Residues Arg707, Ser746, Ile748, Glu752, Gly777, Val778, His779, Ser780, Gln820, and Glu832 each contribute to the ATP site. Mg(2+) is bound by residues Gln820, Glu832, and Asn834. Positions 820, 832, and 834 each coordinate Mn(2+). The MGS-like domain maps to 930–1058; that stretch reads SHLSEFGQIV…ESRCFNIEAI (129 aa). The allosteric domain stretch occupies residues 930–1058; it reads SHLSEFGQIV…ESRCFNIEAI (129 aa).

The protein belongs to the CarB family. Composed of two chains; the small (or glutamine) chain promotes the hydrolysis of glutamine to ammonia, which is used by the large (or ammonia) chain to synthesize carbamoyl phosphate. Tetramer of heterodimers (alpha,beta)4. Requires Mg(2+) as cofactor. It depends on Mn(2+) as a cofactor.

It catalyses the reaction hydrogencarbonate + L-glutamine + 2 ATP + H2O = carbamoyl phosphate + L-glutamate + 2 ADP + phosphate + 2 H(+). It carries out the reaction hydrogencarbonate + NH4(+) + 2 ATP = carbamoyl phosphate + 2 ADP + phosphate + 2 H(+). The protein operates within amino-acid biosynthesis; L-arginine biosynthesis; carbamoyl phosphate from bicarbonate: step 1/1. It participates in pyrimidine metabolism; UMP biosynthesis via de novo pathway; (S)-dihydroorotate from bicarbonate: step 1/3. Functionally, large subunit of the glutamine-dependent carbamoyl phosphate synthetase (CPSase). CPSase catalyzes the formation of carbamoyl phosphate from the ammonia moiety of glutamine, carbonate, and phosphate donated by ATP, constituting the first step of 2 biosynthetic pathways, one leading to arginine and/or urea and the other to pyrimidine nucleotides. The large subunit (synthetase) binds the substrates ammonia (free or transferred from glutamine from the small subunit), hydrogencarbonate and ATP and carries out an ATP-coupled ligase reaction, activating hydrogencarbonate by forming carboxy phosphate which reacts with ammonia to form carbamoyl phosphate. This Streptococcus pyogenes serotype M3 (strain SSI-1) protein is Carbamoyl phosphate synthase large chain.